The following is a 410-amino-acid chain: Pyruvate dehydrogenase complex protein X component, mitochondrial (410 aa).

Residues 1–30 (MLSAISKVSTLKSCTRYLTKCNYHASAKLL) constitute a mitochondrion transit peptide. A Lipoyl-binding domain is found at 32 to 108 (VKTFSMPAMS…DVGEPIAYIA (77 aa)). Lys-73 carries the post-translational modification N6-lipoyllysine. The Peripheral subunit-binding (PSBD) domain occupies 169–210 (TLLPSVSLLLAENNISKQKALKEIAPSGSNGRLLKGDVLAYL).

Belongs to the 2-oxoacid dehydrogenase family. As to quaternary structure, eukaryotic pyruvate dehydrogenase (PDH) complexes are organized as a core consisting of the oligomeric dihydrolipoamide acetyl-transferase (E2), around which are arranged multiple copies of pyruvate dehydrogenase (E1), dihydrolipoamide dehydrogenase (E3) and protein X (E3BP) bound by non-covalent bonds.

The protein localises to the mitochondrion matrix. Its function is as follows. Required for anchoring dihydrolipoamide dehydrogenase (E3) to the dihydrolipoamide transacetylase (E2) core of the pyruvate dehydrogenase complexes of eukaryotes. This specific binding is essential for a functional PDH complex. In Saccharomyces cerevisiae (strain ATCC 204508 / S288c) (Baker's yeast), this protein is Pyruvate dehydrogenase complex protein X component, mitochondrial (PDX1).